The following is a 354-amino-acid chain: MSVIDVHIRIDSLRRLIDENMQMEIWPQLLRMCSDTVSDVDVDTSALMAFLVTVARKSQTAFANANAATASAFAAGGARAPAAMPAPAPPAQTVFGALVSAPSAEPALVDMRRYRAAARRLIQYYSLNTTTSSEFKVRDVVMTMIFLQRSENYHQLFKLLDTAMDDFTCRPQLTEAQVSTLLHTLRTLLEMPTTPIDMTTVDVMRSSFARCFASPVLRYAKVVLLQGETVSRDERTTLEELLVERGDNIQKLQPQQYVASGSEIPFCDDPEFINRLLKHLDPYPLSRMYYNAANSMFYTTMENYAVANCKFNIEDYNRIFKGAESIKKHANKTAEDSDELDIYLGTTAKRKKII.

The Nuclear localization signal motif lies at 349–352 (KRKK).

This sequence belongs to the baculoviridae C42 protein family.

It localises to the host nucleus. The chain is Protein C42 from Orgyia pseudotsugata (Douglas-fir tussock moth).